The following is a 147-amino-acid chain: Pathogenesis-related protein PR-4A (147 aa).

Positions methionine 1–alanine 25 are cleaved as a signal peptide. The Barwin domain occupies glutamine 26–aspartate 147. Disulfide bonds link cysteine 54–cysteine 86, cysteine 75–cysteine 109, and cysteine 89–cysteine 145.

It localises to the secreted. Its subcellular location is the cell wall. The sequence is that of Pathogenesis-related protein PR-4A from Nicotiana tabacum (Common tobacco).